Here is a 385-residue protein sequence, read N- to C-terminus: Glucans biosynthesis protein C (385 aa).

Transmembrane regions (helical) follow at residues 17-37, 60-80, 91-111, 137-157, 173-193, 212-232, 239-259, 274-294, 311-331, and 338-358; these read AWLMLLGIPFHISLIYSSHTW, MQVFFVISGYFSYMLFLRYPL, VGIPMLTAIPLLTLPQFIMLQ, ISHLWFLLVLVVMTTLCVWIF, KFSMVKLSVIFLCLGIGYAVI, FIVMQTLFYLPFFILGALAFI, LFTTPSRGCTLAAALAFVAYL, TESVITMVLGLWMVNVVFSFG, ASLFIYLVHHPLTLFFGAYIT, and WLGFLCGLIFVVGIAIILYEI.

This sequence belongs to the acyltransferase 3 family. OpgC subfamily.

The protein localises to the cell membrane. It participates in glycan metabolism; osmoregulated periplasmic glucan (OPG) biosynthesis. Its function is as follows. Necessary for the succinyl substitution of periplasmic glucans. Could catalyze the transfer of succinyl residues from the cytoplasmic side of the membrane to the nascent glucan backbones on the periplasmic side of the membrane. This Escherichia coli (strain SMS-3-5 / SECEC) protein is Glucans biosynthesis protein C.